The primary structure comprises 696 residues: Gametogenetin-binding protein 2 (696 aa).

Phosphoserine is present on residues S360 and S602.

In terms of assembly, interacts with isoform 1 of GGN. In terms of tissue distribution, testis-specific.

The protein resides in the cytoplasmic vesicle. In terms of biological role, may be involved in spermatogenesis. The protein is Gametogenetin-binding protein 2 (Ggnbp2) of Mus musculus (Mouse).